The chain runs to 138 residues: Nucleoside diphosphate kinase (138 aa).

Residues K9, F57, R85, T91, R102, and N112 each contribute to the ATP site. The active-site Pros-phosphohistidine intermediate is H115.

This sequence belongs to the NDK family. In terms of assembly, homotetramer. It depends on Mg(2+) as a cofactor.

It localises to the cytoplasm. The catalysed reaction is a 2'-deoxyribonucleoside 5'-diphosphate + ATP = a 2'-deoxyribonucleoside 5'-triphosphate + ADP. The enzyme catalyses a ribonucleoside 5'-diphosphate + ATP = a ribonucleoside 5'-triphosphate + ADP. Its function is as follows. Major role in the synthesis of nucleoside triphosphates other than ATP. The ATP gamma phosphate is transferred to the NDP beta phosphate via a ping-pong mechanism, using a phosphorylated active-site intermediate. The polypeptide is Nucleoside diphosphate kinase (Deinococcus geothermalis (strain DSM 11300 / CIP 105573 / AG-3a)).